A 421-amino-acid chain; its full sequence is Glutamate-1-semialdehyde 2,1-aminomutase (421 aa).

At Lys261 the chain carries N6-(pyridoxal phosphate)lysine.

It belongs to the class-III pyridoxal-phosphate-dependent aminotransferase family. HemL subfamily. It depends on pyridoxal 5'-phosphate as a cofactor.

Its subcellular location is the cytoplasm. It catalyses the reaction (S)-4-amino-5-oxopentanoate = 5-aminolevulinate. Its pathway is porphyrin-containing compound metabolism; protoporphyrin-IX biosynthesis; 5-aminolevulinate from L-glutamyl-tRNA(Glu): step 2/2. The chain is Glutamate-1-semialdehyde 2,1-aminomutase (hemL) from Thermoplasma acidophilum (strain ATCC 25905 / DSM 1728 / JCM 9062 / NBRC 15155 / AMRC-C165).